The following is a 164-amino-acid chain: FMN reductase (NADH) RutF (164 aa).

It belongs to the non-flavoprotein flavin reductase family. RutF subfamily.

The enzyme catalyses FMNH2 + NAD(+) = FMN + NADH + 2 H(+). Functionally, catalyzes the reduction of FMN to FMNH2 which is used to reduce pyrimidine by RutA via the Rut pathway. The sequence is that of FMN reductase (NADH) RutF from Klebsiella variicola (strain At-22).